A 550-amino-acid polypeptide reads, in one-letter code: Membrane protein insertase YidC (550 aa).

The helical transmembrane segment at 6–26 (LIVFIVLSFGLLFVWQEYFAP) threads the bilayer. A disordered region spans residues 30-59 (PKPVAAAVQPDGTPAPATARPADSPATGKL). 4 consecutive transmembrane segments (helical) span residues 360 to 380 (WGWA…PLSA), 430 to 450 (LPIV…LASV), 472 to 492 (ILPA…PPPA), and 504 to 524 (PLAF…YWLV).

Belongs to the OXA1/ALB3/YidC family. Type 1 subfamily. In terms of assembly, interacts with the Sec translocase complex via SecD. Specifically interacts with transmembrane segments of nascent integral membrane proteins during membrane integration.

Its subcellular location is the cell inner membrane. Its function is as follows. Required for the insertion and/or proper folding and/or complex formation of integral membrane proteins into the membrane. Involved in integration of membrane proteins that insert both dependently and independently of the Sec translocase complex, as well as at least some lipoproteins. Aids folding of multispanning membrane proteins. This chain is Membrane protein insertase YidC, found in Laribacter hongkongensis (strain HLHK9).